The primary structure comprises 824 residues: Sphingomyelin phosphodiesterase 4 (824 aa).

The helical transmembrane segment at 777 to 797 (LAFLFIFYILGSLLSLGPLIC) threads the bilayer.

The cofactor is Mg(2+).

The protein localises to the endoplasmic reticulum membrane. Its subcellular location is the golgi apparatus membrane. It localises to the nucleus envelope. The protein resides in the cell membrane. It is found in the sarcolemma. It catalyses the reaction a sphingomyelin + H2O = phosphocholine + an N-acylsphing-4-enine + H(+). Functionally, catalyzes the hydrolysis of membrane sphingomyelin to form phosphorylcholine and ceramide. It has a relevant role in the homeostasis of membrane sphingolipids, thereby influencing membrane integrity, and endoplasmic reticulum organization and function. May sensitize cells to DNA damage-induced apoptosis. The chain is Sphingomyelin phosphodiesterase 4 (smpd4) from Xenopus laevis (African clawed frog).